Reading from the N-terminus, the 368-residue chain is Flavanone 3-dioxygenase (368 aa).

Positions 191–295 (CVDMDQKVIV…RMSIATFQNP (105 aa)) constitute a Fe2OG dioxygenase domain. 3 residues coordinate Fe cation: histidine 218, aspartate 220, and histidine 276. Arginine 286 contributes to the 2-oxoglutarate binding site.

It belongs to the iron/ascorbate-dependent oxidoreductase family. The cofactor is Fe(2+). It depends on L-ascorbate as a cofactor.

The catalysed reaction is a (2S)-flavan-4-one + 2-oxoglutarate + O2 = a (2R,3R)-dihydroflavonol + succinate + CO2. It participates in secondary metabolite biosynthesis; flavonoid biosynthesis. In terms of biological role, involved in the conversion of (2S)-naringenin to (+)-(2R/3R)-dihydrokaempferol. The protein is Flavanone 3-dioxygenase (FHT) of Petroselinum crispum (Parsley).